A 289-amino-acid polypeptide reads, in one-letter code: Glucosamine-6-phosphate deaminase 1 (289 aa).

Lysine 64 carries the post-translational modification N6-acetyllysine. Catalysis depends on aspartate 72, which acts as the Proton acceptor; for enolization step. Aspartate 141 (for ring-opening step) is an active-site residue. Residue histidine 143 is the Proton acceptor; for ring-opening step of the active site. Glutamate 148 acts as the For ring-opening step in catalysis. Threonine 161 is modified (phosphothreonine).

This sequence belongs to the glucosamine/galactosamine-6-phosphate isomerase family. As to quaternary structure, homohexamer.

The protein resides in the cytoplasm. It carries out the reaction alpha-D-glucosamine 6-phosphate + H2O = beta-D-fructose 6-phosphate + NH4(+). It functions in the pathway nucleotide-sugar biosynthesis; UDP-N-acetyl-alpha-D-glucosamine biosynthesis; alpha-D-glucosamine 6-phosphate from D-fructose 6-phosphate: step 1/1. With respect to regulation, allosterically activated by N-acetylglucosamine-6-phosphate (GlcNAc6P). In terms of biological role, catalyzes the reversible conversion of alpha-D-glucosamine 6-phosphate (GlcN-6P) into beta-D-fructose 6-phosphate (Fru-6P) and ammonium ion, a regulatory reaction step in de novo uridine diphosphate-N-acetyl-alpha-D-glucosamine (UDP-GlcNAc) biosynthesis via hexosamine pathway. Deamination is coupled to aldo-keto isomerization mediating the metabolic flux from UDP-GlcNAc toward Fru-6P. At high ammonium level can drive amination and isomerization of Fru-6P toward hexosamines and UDP-GlcNAc synthesis. Has a role in fine tuning the metabolic fluctuations of cytosolic UDP-GlcNAc and their effects on hyaluronan synthesis that occur during tissue remodeling. Seems to trigger calcium oscillations in mammalian eggs. These oscillations serve as the essential trigger for egg activation and early development of the embryo. This chain is Glucosamine-6-phosphate deaminase 1, found in Bos taurus (Bovine).